Here is a 422-residue protein sequence, read N- to C-terminus: Enolase (422 aa).

Gln162 contributes to the (2R)-2-phosphoglycerate binding site. The Proton donor role is filled by Glu204. Mg(2+) contacts are provided by Asp241, Glu284, and Asp311. Positions 336, 365, 366, and 387 each coordinate (2R)-2-phosphoglycerate. Residue Lys336 is the Proton acceptor of the active site.

The protein belongs to the enolase family. The cofactor is Mg(2+).

The protein resides in the cytoplasm. Its subcellular location is the secreted. The protein localises to the cell surface. It carries out the reaction (2R)-2-phosphoglycerate = phosphoenolpyruvate + H2O. Its pathway is carbohydrate degradation; glycolysis; pyruvate from D-glyceraldehyde 3-phosphate: step 4/5. Its function is as follows. Catalyzes the reversible conversion of 2-phosphoglycerate (2-PG) into phosphoenolpyruvate (PEP). It is essential for the degradation of carbohydrates via glycolysis. This Bartonella tribocorum (strain CIP 105476 / IBS 506) protein is Enolase.